The chain runs to 533 residues: D-3-phosphoglycerate dehydrogenase (533 aa).

Ala-2 is modified (N-acetylalanine). Ser-14 bears the Phosphoserine mark. Position 21 is an N6-acetyllysine; alternate (Lys-21). Residue Lys-21 forms a Glycyl lysine isopeptide (Lys-Gly) (interchain with G-Cter in SUMO1); alternate linkage. Lys-21 participates in a covalent cross-link: Glycyl lysine isopeptide (Lys-Gly) (interchain with G-Cter in SUMO2); alternate. Lys-58 is modified (N6-acetyllysine). Residues Thr-78, 155 to 156 (RI), Asp-175, Thr-207, 234 to 236 (CAR), and Asp-260 contribute to the NAD(+) site. Residue Thr-78 is modified to Phosphothreonine. The active site involves Arg-236. Residue Glu-265 is part of the active site. His-283 acts as the Proton donor in catalysis. Position 283-286 (283-286 (HLGA)) interacts with NAD(+).

This sequence belongs to the D-isomer specific 2-hydroxyacid dehydrogenase family. As to quaternary structure, homotetramer.

It carries out the reaction (2R)-3-phosphoglycerate + NAD(+) = 3-phosphooxypyruvate + NADH + H(+). It catalyses the reaction (R)-2-hydroxyglutarate + NAD(+) = 2-oxoglutarate + NADH + H(+). The enzyme catalyses (S)-malate + NAD(+) = oxaloacetate + NADH + H(+). The protein operates within amino-acid biosynthesis; L-serine biosynthesis; L-serine from 3-phospho-D-glycerate: step 1/3. Its function is as follows. Catalyzes the reversible oxidation of 3-phospho-D-glycerate to 3-phosphonooxypyruvate, the first step of the phosphorylated L-serine biosynthesis pathway. Also catalyzes the reversible oxidation of 2-hydroxyglutarate to 2-oxoglutarate and the reversible oxidation of (S)-malate to oxaloacetate. In Pan troglodytes (Chimpanzee), this protein is D-3-phosphoglycerate dehydrogenase (PHGDH).